Reading from the N-terminus, the 213-residue chain is ATP synthase peripheral stalk subunit OSCP, mitochondrial (213 aa).

The N-terminal 23 residues, 1 to 23, are a transit peptide targeting the mitochondrion; that stretch reads MASQAVSGLSRQVRCFSTSVVRP. The SIFI-degron signature appears at 5–23; it reads AVSGLSRQVRCFSTSVVRP. N6-acetyllysine is present on residues lysine 54, lysine 60, lysine 70, and lysine 73. Lysine 90 carries the post-translational modification N6-succinyllysine. An N6-acetyllysine; alternate mark is found at lysine 100, lysine 158, and lysine 162. An N6-succinyllysine; alternate mark is found at lysine 100, lysine 158, and lysine 162. N6-acetyllysine occurs at positions 172, 176, and 192. At lysine 199 the chain carries N6-succinyllysine.

It belongs to the ATPase delta chain family. In terms of assembly, component of the ATP synthase complex composed at least of ATP5F1A/subunit alpha, ATP5F1B/subunit beta, ATP5MC1/subunit c (homooctomer), MT-ATP6/subunit a, MT-ATP8/subunit 8, ATP5ME/subunit e, ATP5MF/subunit f, ATP5MG/subunit g, ATP5MK/subunit k, ATP5MJ/subunit j, ATP5F1C/subunit gamma, ATP5F1D/subunit delta, ATP5F1E/subunit epsilon, ATP5PF/subunit F6, ATP5PB/subunit b, ATP5PD/subunit d, ATP5PO/subunit OSCP. ATP synthase complex consists of a soluble F(1) head domain (subunits alpha(3) and beta(3)) - the catalytic core - and a membrane F(0) domain - the membrane proton channel (subunits c, a, 8, e, f, g, k and j). These two domains are linked by a central stalk (subunits gamma, delta, and epsilon) rotating inside the F1 region and a stationary peripheral stalk (subunits F6, b, d, and OSCP). Post-translationally, acetylation at Lys-162 decreases ATP production. Deacetylated by SIRT3. In response to mitochondrial stress, the precursor protein is ubiquitinated by the SIFI complex in the cytoplasm before mitochondrial import, leading to its degradation. Within the SIFI complex, UBR4 initiates ubiquitin chain that are further elongated or branched by KCMF1.

The protein resides in the mitochondrion. It is found in the mitochondrion inner membrane. Subunit OSCP, of the mitochondrial membrane ATP synthase complex (F(1)F(0) ATP synthase or Complex V) that produces ATP from ADP in the presence of a proton gradient across the membrane which is generated by electron transport complexes of the respiratory chain. ATP synthase complex consist of a soluble F(1) head domain - the catalytic core - and a membrane F(1) domain - the membrane proton channel. These two domains are linked by a central stalk rotating inside the F(1) region and a stationary peripheral stalk. During catalysis, ATP synthesis in the catalytic domain of F(1) is coupled via a rotary mechanism of the central stalk subunits to proton translocation. In vivo, can only synthesize ATP although its ATP hydrolase activity can be activated artificially in vitro. Part of the complex F(0) domain. Part of the complex F(0) domain and the peripheric stalk, which acts as a stator to hold the catalytic alpha(3)beta(3) subcomplex and subunit a/ATP6 static relative to the rotary elements. The sequence is that of ATP synthase peripheral stalk subunit OSCP, mitochondrial from Sus scrofa (Pig).